The primary structure comprises 226 residues: EEF1A lysine methyltransferase 3 (226 aa).

S-adenosyl-L-methionine is bound by residues W57, 83–85 (GAG), D104, W133, and A150.

Belongs to the methyltransferase superfamily. METTL21 family. As to quaternary structure, interacts with members of the heat shock protein 70 and 90 families and of the TCP-1 chaperonin family, as well as with HSPD1, STIP1 and tubulin; at least some of these proteins may be methylation substrates.

The protein resides in the cytoplasm. It is found in the cytoskeleton. Its subcellular location is the microtubule organizing center. It localises to the centrosome. The catalysed reaction is L-lysyl-[protein] + 3 S-adenosyl-L-methionine = N(6),N(6),N(6)-trimethyl-L-lysyl-[protein] + 3 S-adenosyl-L-homocysteine + 3 H(+). It catalyses the reaction L-lysyl-[protein] + S-adenosyl-L-methionine = N(6)-methyl-L-lysyl-[protein] + S-adenosyl-L-homocysteine + H(+). It carries out the reaction N(6)-methyl-L-lysyl-[protein] + S-adenosyl-L-methionine = N(6),N(6)-dimethyl-L-lysyl-[protein] + S-adenosyl-L-homocysteine + H(+). The enzyme catalyses N(6),N(6)-dimethyl-L-lysyl-[protein] + S-adenosyl-L-methionine = N(6),N(6),N(6)-trimethyl-L-lysyl-[protein] + S-adenosyl-L-homocysteine + H(+). Functionally, protein-lysine methyltransferase that selectively mono-, di- and trimethylates 'Lys-165' of the translation elongation factors EEF1A1 and EEF1A2 in an aminoacyl-tRNA and GTP-dependent manner. EEF1A1 methylation by EEF1AKMT3 is dynamic as well as inducible by stress conditions, such as ER-stress, and plays a regulatory role on mRNA translation. This chain is EEF1A lysine methyltransferase 3, found in Homo sapiens (Human).